A 427-amino-acid chain; its full sequence is Enolase (427 aa).

Residue Q163 coordinates (2R)-2-phosphoglycerate. E205 acts as the Proton donor in catalysis. Mg(2+) is bound by residues D242, E285, and D312. (2R)-2-phosphoglycerate-binding residues include K337, R366, S367, and K388. Catalysis depends on K337, which acts as the Proton acceptor.

This sequence belongs to the enolase family. It depends on Mg(2+) as a cofactor.

It localises to the cytoplasm. The protein localises to the secreted. Its subcellular location is the cell surface. It carries out the reaction (2R)-2-phosphoglycerate = phosphoenolpyruvate + H2O. It participates in carbohydrate degradation; glycolysis; pyruvate from D-glyceraldehyde 3-phosphate: step 4/5. Its function is as follows. Catalyzes the reversible conversion of 2-phosphoglycerate (2-PG) into phosphoenolpyruvate (PEP). It is essential for the degradation of carbohydrates via glycolysis. This is Enolase from Rhodopseudomonas palustris (strain BisA53).